Here is a 77-residue protein sequence, read N- to C-terminus: Metallocarboxypeptidase inhibitor (77 aa).

A signal peptide spans 1–32 (MAQKFTILFTILLVVIAAQDVMAQDATLTKLF). Glutamine 33 carries the post-translational modification Pyrrolidone carboxylic acid. Cystine bridges form between cysteine 39/cysteine 55, cysteine 43/cysteine 58, and cysteine 49/cysteine 65. Residues 70 to 77 (GRAMAIGV) constitute a propeptide, hydrophobic peptide.

The protein to potato MCPI. In terms of tissue distribution, ovaries.

Functionally, may play a defensive role against insect attacks. This chain is Metallocarboxypeptidase inhibitor, found in Solanum lycopersicum (Tomato).